Consider the following 148-residue polypeptide: Helix-loop-helix protein 14 (148 aa).

Disordered regions lie at residues 1 to 21 (MAKK…HQVN), 63 to 83 (DPQQ…NSNN), and 112 to 132 (GDVS…SYSP). A basic motif region spans residues 4 to 17 (KNQVARNERERKRV). In terms of domain architecture, bHLH spans 4-56 (KNQVARNERERKRVHQVNHGFDVLRNRLQPKNHTKKWSKADTLREAVKYIQQL). Residues 18–56 (HQVNHGFDVLRNRLQPKNHTKKWSKADTLREAVKYIQQL) form a helix-loop-helix motif region. Over residues 63 to 78 (DPQQPSVSSSTPDYTM) the composition is skewed to polar residues. Low complexity predominate over residues 120–132 (SPTSSVSSSSYSP).

The protein localises to the nucleus. In terms of biological role, probable transcription factor, involved in determining neuroblast cell fate, morphogenesis and aspects of terminal differentiation in both left/right symmetric and asymmetric neuronal lineages. This Caenorhabditis elegans protein is Helix-loop-helix protein 14.